Consider the following 520-residue polypeptide: Probable methylmalonate-semialdehyde/malonate-semialdehyde dehydrogenase [acylating], mitochondrial (520 aa).

NAD(+) is bound by residues A169, F171, K195, E198, R199, and S248. Residue C303 is the Nucleophile of the active site. Residue E403 coordinates NAD(+).

The protein belongs to the aldehyde dehydrogenase family. In terms of assembly, homotetramer.

The protein resides in the mitochondrion. The catalysed reaction is 2-methyl-3-oxopropanoate + NAD(+) + CoA + H2O = propanoyl-CoA + hydrogencarbonate + NADH + H(+). It carries out the reaction 3-oxopropanoate + NAD(+) + CoA + H2O = hydrogencarbonate + acetyl-CoA + NADH + H(+). In terms of biological role, probable malonate and methylmalonate semialdehyde dehydrogenase involved in the catabolism of valine, thymine, and compounds catabolized by way of beta-alanine, including uracil and cytidine. The chain is Probable methylmalonate-semialdehyde/malonate-semialdehyde dehydrogenase [acylating], mitochondrial from Drosophila pseudoobscura pseudoobscura (Fruit fly).